The primary structure comprises 223 residues: Glutathione S-transferase 4 (223 aa).

Residue alanine 2 is modified to Blocked amino end (Ala). The GST N-terminal domain maps to 4–85 (PAVKVYGWAI…HVLRKHKPEL (82 aa)). Residues serine 14, 43–44 (HR), 56–57 (KV), and 69–70 (ES) contribute to the glutathione site. The 134-residue stretch at 90–223 (RLEQTAMVDV…VGAGAPKEQE (134 aa)) folds into the GST C-terminal domain.

Belongs to the GST superfamily. Phi family. As to quaternary structure, homodimer or heterodimer of GST-I and GST-IV (=GST-II). Seedling roots.

It carries out the reaction RX + glutathione = an S-substituted glutathione + a halide anion + H(+). Its function is as follows. Conjugation of reduced glutathione to a wide number of exogenous and endogenous hydrophobic electrophiles. Involved in the detoxification of certain herbicides. Most active with substrates possessing a chloroacetamide structure. Trans-cinnamic acid and 1-chloro-2,4-dinitrobenzene are not effective substrates. May play an important role in the benoxacor-mediated protection of maize from metolachlor injury. The polypeptide is Glutathione S-transferase 4 (GST4) (Zea mays (Maize)).